The following is a 347-amino-acid chain: Dihydroorotase (347 aa).

Zn(2+) is bound by residues His-17 and His-19. Substrate contacts are provided by residues 19–21 (HLR) and Asn-45. 3 residues coordinate Zn(2+): Lys-103, His-140, and His-178. Lys-103 carries the post-translational modification N6-carboxylysine. Position 140 (His-140) interacts with substrate. Residue Leu-223 coordinates substrate. Asp-251 lines the Zn(2+) pocket. The active site involves Asp-251. His-255 and Ala-267 together coordinate substrate.

It belongs to the metallo-dependent hydrolases superfamily. DHOase family. Class II DHOase subfamily. Homodimer. Zn(2+) serves as cofactor.

It catalyses the reaction (S)-dihydroorotate + H2O = N-carbamoyl-L-aspartate + H(+). Its pathway is pyrimidine metabolism; UMP biosynthesis via de novo pathway; (S)-dihydroorotate from bicarbonate: step 3/3. In terms of biological role, catalyzes the reversible cyclization of carbamoyl aspartate to dihydroorotate. This Pectobacterium atrosepticum (strain SCRI 1043 / ATCC BAA-672) (Erwinia carotovora subsp. atroseptica) protein is Dihydroorotase.